A 336-amino-acid polypeptide reads, in one-letter code: Holliday junction branch migration complex subunit RuvB (336 aa).

Positions 4 to 184 (SDRLISSQSI…FGIVQRLEYY (181 aa)) are large ATPase domain (RuvB-L). ATP is bound by residues Ile23, Arg24, Gly65, Lys68, Thr69, Thr70, 131 to 133 (EDY), Arg174, Tyr184, and Arg221. Position 69 (Thr69) interacts with Mg(2+). The segment at 185 to 255 (SVDSLTQIVA…MAQQALEMLE (71 aa)) is small ATPAse domain (RuvB-S). Positions 258 to 336 (QHGFDLMDRK…HFGFSAIEQE (79 aa)) are head domain (RuvB-H). Residues Arg313 and Arg318 each contribute to the DNA site.

It belongs to the RuvB family. As to quaternary structure, homohexamer. Forms an RuvA(8)-RuvB(12)-Holliday junction (HJ) complex. HJ DNA is sandwiched between 2 RuvA tetramers; dsDNA enters through RuvA and exits via RuvB. An RuvB hexamer assembles on each DNA strand where it exits the tetramer. Each RuvB hexamer is contacted by two RuvA subunits (via domain III) on 2 adjacent RuvB subunits; this complex drives branch migration. In the full resolvosome a probable DNA-RuvA(4)-RuvB(12)-RuvC(2) complex forms which resolves the HJ.

Its subcellular location is the cytoplasm. It catalyses the reaction ATP + H2O = ADP + phosphate + H(+). The RuvA-RuvB-RuvC complex processes Holliday junction (HJ) DNA during genetic recombination and DNA repair, while the RuvA-RuvB complex plays an important role in the rescue of blocked DNA replication forks via replication fork reversal (RFR). RuvA specifically binds to HJ cruciform DNA, conferring on it an open structure. The RuvB hexamer acts as an ATP-dependent pump, pulling dsDNA into and through the RuvAB complex. RuvB forms 2 homohexamers on either side of HJ DNA bound by 1 or 2 RuvA tetramers; 4 subunits per hexamer contact DNA at a time. Coordinated motions by a converter formed by DNA-disengaged RuvB subunits stimulates ATP hydrolysis and nucleotide exchange. Immobilization of the converter enables RuvB to convert the ATP-contained energy into a lever motion, pulling 2 nucleotides of DNA out of the RuvA tetramer per ATP hydrolyzed, thus driving DNA branch migration. The RuvB motors rotate together with the DNA substrate, which together with the progressing nucleotide cycle form the mechanistic basis for DNA recombination by continuous HJ branch migration. Branch migration allows RuvC to scan DNA until it finds its consensus sequence, where it cleaves and resolves cruciform DNA. The polypeptide is Holliday junction branch migration complex subunit RuvB (Legionella pneumophila subsp. pneumophila (strain Philadelphia 1 / ATCC 33152 / DSM 7513)).